A 233-amino-acid chain; its full sequence is Bcl-2-like protein 1 (233 aa).

A BH4 motif is present at residues Ser-4 to Trp-24. Residues Phe-27–Ser-73 form a disordered region. At Ser-49 the chain carries Phosphoserine; by PLK3. Ser-62 is modified (phosphoserine; by CDK1). Residues Val-86–Arg-100 carry the BH3 motif. The BH1 signature appears at Glu-129–Gly-148. The short motif at Pro-180–Tyr-195 is the BH2 element. The helical transmembrane segment at Phe-210 to Leu-226 threads the bilayer.

This sequence belongs to the Bcl-2 family. Homodimer. Interacts with BAD. Interacts with PGAM5. Interacts with HEBP2. Interacts with p53/TP53 and BBC3; interaction with BBC3 disrupts the interaction with p53/TP53. Interacts with ATP5F1A and ATP5F1B; the interactions mediate the association of isoform Bcl-X(L) with the mitochondrial membrane ATP synthase F(1)F(0) ATP synthase. Interacts with VDAC1. Interacts with BCL2L11 (via BH3). Interacts with RNF183. Interacts with GIMAP3/IAN4 and GIMAP5/IAN5. Interacts with GIMAP5 and HSPA8/HSC70; the interaction between HSPA8 and BCL2L1 is impaired in the absence of GIMAP5. Interacts with isoform 4 of CLU; this interaction releases and activates BAX and promotes cell death. In terms of assembly, forms heterodimers with BAX, BAK or BCL2; heterodimerization with BAX does not seem to be required for anti-apoptotic activity. Interacts with isoform 1 of SIVA1; the interaction inhibits the anti-apoptotic activity. Interacts with IKZF3. Interacts with RTL10/BOP. Interacts with DNM1L and CLTA; DNM1L and BCL2L1 isoform BCL-X(L) may form a complex in synaptic vesicles that also contains clathrin and MFF. Interacts (via the loop between motifs BH4 and BH3) with NLRP1 (via LRR repeats), but not with NLRP2, NLRP3, NLRP4, PYCARD, nor MEFV. Interacts with BECN1. Post-translationally, proteolytically cleaved by caspases during apoptosis. The cleaved protein, lacking the BH4 motif, has pro-apoptotic activity. In terms of processing, phosphorylated on Ser-62 by CDK1. This phosphorylation is partial in normal mitotic cells, but complete in G2-arrested cells upon DNA-damage, thus promoting subsequent apoptosis probably by triggering caspases-mediated proteolysis. Phosphorylated by PLK3, leading to regulate the G2 checkpoint and progression to cytokinesis during mitosis. Phosphorylation at Ser-49 appears during the S phase and G2, disappears rapidly in early mitosis during prometaphase, metaphase and early anaphase, and re-appears during telophase and cytokinesis. Ubiquitinated by RNF183 during prolonged ER stress, leading to degradation by the proteosome. Widely expressed, with highest levels in the brain, thymus, bone marrow, and kidney. Bcl-X(L) and Bcl-X(delta-TM) expression is enhanced in B- and T-lymphocytes that have been activated.

It is found in the mitochondrion membrane. Its subcellular location is the nucleus membrane. The protein resides in the cytoplasm. The protein localises to the cytoskeleton. It localises to the microtubule organizing center. It is found in the centrosome. Its subcellular location is the mitochondrion inner membrane. The protein resides in the mitochondrion outer membrane. The protein localises to the mitochondrion matrix. It localises to the cytoplasmic vesicle. It is found in the secretory vesicle. Its subcellular location is the synaptic vesicle membrane. The protein resides in the cytosol. Functionally, potent inhibitor of cell death. Inhibits activation of caspases. Appears to regulate cell death by blocking the voltage-dependent anion channel (VDAC) by binding to it and preventing the release of the caspase activator, CYC1, from the mitochondrial membrane. Also acts as a regulator of G2 checkpoint and progression to cytokinesis during mitosis. Isoform Bcl-X(L) also regulates presynaptic plasticity, including neurotransmitter release and recovery, number of axonal mitochondria as well as size and number of synaptic vesicle clusters. During synaptic stimulation, increases ATP availability from mitochondria through regulation of mitochondrial membrane ATP synthase F(1)F(0) activity and regulates endocytic vesicle retrieval in hippocampal neurons through association with DMN1L and stimulation of its GTPase activity in synaptic vesicles. May attenuate inflammation impairing NLRP1-inflammasome activation, hence CASP1 activation and IL1B release. Its function is as follows. Isoform Bcl-X(S) promotes apoptosis. In Mus musculus (Mouse), this protein is Bcl-2-like protein 1 (Bcl2l1).